The sequence spans 725 residues: ATP-dependent DNA helicase II subunit 2 (725 aa).

Residues 232-478 (LTLGDPQKYP…QQAMSDYVDA (247 aa)) enclose the Ku domain.

It belongs to the ku80 family. In terms of assembly, heterodimer of mus-51/ku70 and mus-52/ku80.

It localises to the nucleus. The protein resides in the chromosome. It is found in the telomere. It catalyses the reaction ATP + H2O = ADP + phosphate + H(+). Functionally, single-stranded DNA-dependent ATP-dependent helicase. Involved in non-homologous end joining (NHEJ) DNA double strand break repair. DNA-binding is sequence-independent but has a high affinity to nicks in double-stranded DNA and to the ends of duplex DNA. Binds to naturally occurring chromosomal ends, and therefore provides chromosomal end protection. Required also for telomere recombination to repair telomeric ends in the absence of telomerase. ku70, of the ku70/ku80 heterodimer, binds to the stem loop of tlc1, the RNA component of telomerase. Involved in telomere maintenance. Interacts with telomeric repeats and subtelomeric sequences thereby controlling telomere length and protecting against subtelomeric rearrangement. Maintains telomeric chromatin, which is involved in silencing the expression of genes located at the telomere. Required for mating-type switching. In Neurospora crassa (strain ATCC 24698 / 74-OR23-1A / CBS 708.71 / DSM 1257 / FGSC 987), this protein is ATP-dependent DNA helicase II subunit 2 (mus-52).